A 211-amino-acid chain; its full sequence is Methylthioribulose-1-phosphate dehydratase (211 aa).

The Zn(2+) site is built by His-101 and His-103.

It belongs to the aldolase class II family. MtnB subfamily. It depends on Zn(2+) as a cofactor.

It catalyses the reaction 5-(methylsulfanyl)-D-ribulose 1-phosphate = 5-methylsulfanyl-2,3-dioxopentyl phosphate + H2O. It functions in the pathway amino-acid biosynthesis; L-methionine biosynthesis via salvage pathway; L-methionine from S-methyl-5-thio-alpha-D-ribose 1-phosphate: step 2/6. Functionally, catalyzes the dehydration of methylthioribulose-1-phosphate (MTRu-1-P) into 2,3-diketo-5-methylthiopentyl-1-phosphate (DK-MTP-1-P). The protein is Methylthioribulose-1-phosphate dehydratase of Alcanivorax borkumensis (strain ATCC 700651 / DSM 11573 / NCIMB 13689 / SK2).